The sequence spans 181 residues: Inner membrane-spanning protein YciB (181 aa).

The next 5 membrane-spanning stretches (helical) occupy residues 10–30 (LVIF…GALI), 50–70 (MHLI…ILHD), 72–92 (SFIK…LGVS), 118–138 (VTWY…YVAF), and 148–168 (FKVF…VVYL).

The protein belongs to the YciB family.

It localises to the cell inner membrane. Functionally, plays a role in cell envelope biogenesis, maintenance of cell envelope integrity and membrane homeostasis. The sequence is that of Inner membrane-spanning protein YciB from Shewanella pealeana (strain ATCC 700345 / ANG-SQ1).